The following is a 148-amino-acid chain: Leghemoglobin 2 (148 aa).

The Globin domain maps to 2-148 (GFTEKQEALV…LSAAIKKAMS (147 aa)). Tyr30 is subject to Nitrated tyrosine. Heme b is bound at residue Ser45. Phosphoserine is present on Ser45. Residue His63 coordinates O2. 3 residues coordinate heme b: Lys66, His95, and Lys98. Position 136 is a nitrated tyrosine (Tyr136).

This sequence belongs to the plant globin family. Monomer. In terms of processing, nitrated in effective nodules and particularly in hypoxic conditions; this mechanism may play a protective role in the symbiosis by buffering toxic peroxynitrite NO(2)(-). Nitration level decrease during nodule senescence. Phosphorylation at Ser-45 disrupts the molecular environment of its porphyrin ring oxygen binding pocket, thus leading to a reduced oxygen consumption and to the delivery of oxygen O(2) to symbiosomes. Stem nodules.

The protein resides in the cytoplasm. The protein localises to the cytosol. It localises to the nucleus. Leghemoglobin that reversibly binds oxygen O(2) through a pentacoordinated heme iron. In stem nodules, facilitates the diffusion of oxygen to the bacteroids while preventing the bacterial nitrogenase from being inactivated by buffering dioxygen, nitric oxide and carbon monoxide, and promoting the formation of reactive oxygen species (ROS, e.g. H(2)O(2)). This role is essential for symbiotic nitrogen fixation (SNF). The chain is Leghemoglobin 2 from Sesbania rostrata.